A 229-amino-acid chain; its full sequence is Transmembrane protein 217 (229 aa).

The chain crosses the membrane as a helical span at residues 13 to 33; it reads MGTVLSGVFTIMAVDMYLIFE. Residue asparagine 39 is glycosylated (N-linked (GlcNAc...) asparagine). The next 3 helical transmembrane spans lie at 67–87, 94–114, and 129–149; these read IVLF…YSVY, LVIY…IQIL, and WFGL…VINY. The N-linked (GlcNAc...) asparagine glycan is linked to asparagine 156.

Its subcellular location is the membrane. The protein is Transmembrane protein 217 (TMEM217) of Homo sapiens (Human).